A 286-amino-acid chain; its full sequence is tRNA (guanine-N(7)-)-methyltransferase (286 aa).

2 positions are modified to phosphoserine: Ser7 and Ser59. Residues Gly103, 126-127, 161-162, and Cys181 contribute to the S-adenosyl-L-methionine site; these read EI and NA. Residue Asp184 is part of the active site. 259–261 contacts S-adenosyl-L-methionine; it reads TEE.

Belongs to the class I-like SAM-binding methyltransferase superfamily. TrmB family. As to quaternary structure, forms a complex with TRM82.

The protein localises to the nucleus. It carries out the reaction guanosine(46) in tRNA + S-adenosyl-L-methionine = N(7)-methylguanosine(46) in tRNA + S-adenosyl-L-homocysteine. The protein operates within tRNA modification; N(7)-methylguanine-tRNA biosynthesis. Methyltransferase that catalyzes the formation of N(7)-methylguanine at position 46 (m7G46) in tRNA, a modification required to maintain stability of tRNAs; its absence resulting in tRNA decay. Both the D-stem and T-stem structures of tRNAs are required for efficient methyltransferase activity. The chain is tRNA (guanine-N(7)-)-methyltransferase from Saccharomyces cerevisiae (strain YJM789) (Baker's yeast).